The primary structure comprises 302 residues: MKIIFMGTPDYAAHILEKLLNTKNIEVVALYTQPDKPVGRKKILTPPAAKNIALKYGIAISQPSRLRDKETVAEVTSIECDYIVVAAYGQILPLEILKHAPCINLHASILPHYRGASPIQQTLLHGDVKTGVTAMLMNEGLDTGDILKIKEIEVDADEMSESLFSRLTEVASDLTIDVLENFVQYTPKIQDDSLSSHCKKITKQDGEVEFDNATAIFNKYRAFTPWPGIYLTSGLKLKKIELFEKESQNESGRILDIQKDSIIVGCKKGSIKVITLQPESKNEMSALSYINGKRLNIADTLS.

Ser108 to Pro111 lines the (6S)-5,6,7,8-tetrahydrofolate pocket.

Belongs to the Fmt family.

It carries out the reaction L-methionyl-tRNA(fMet) + (6R)-10-formyltetrahydrofolate = N-formyl-L-methionyl-tRNA(fMet) + (6S)-5,6,7,8-tetrahydrofolate + H(+). Its function is as follows. Attaches a formyl group to the free amino group of methionyl-tRNA(fMet). The formyl group appears to play a dual role in the initiator identity of N-formylmethionyl-tRNA by promoting its recognition by IF2 and preventing the misappropriation of this tRNA by the elongation apparatus. The chain is Methionyl-tRNA formyltransferase from Sulfurimonas denitrificans (strain ATCC 33889 / DSM 1251) (Thiomicrospira denitrificans (strain ATCC 33889 / DSM 1251)).